A 62-amino-acid chain; its full sequence is Conotoxin Sr5.7 (62 aa).

A signal peptide spans 1–22 (MRCLPVFVILLLLIASAPSVDA). A propeptide spanning residues 23 to 44 (QLKTKDDVPLASFHDNAKGTQH) is cleaved from the precursor.

It belongs to the conotoxin T superfamily. In terms of processing, contains 2 disulfide bonds that can be either 'C1-C3, C2-C4' or 'C1-C4, C2-C3', since these disulfide connectivities have been observed for conotoxins with cysteine framework V (for examples, see AC P0DQQ7 and AC P81755). In terms of tissue distribution, expressed by the venom duct.

It is found in the secreted. The polypeptide is Conotoxin Sr5.7 (Conus spurius (Alphabet cone)).